The chain runs to 620 residues: PAN2-PAN3 deadenylation complex subunit PAN3 (620 aa).

The segment at 7-36 (SAKGTLCKNILIYGYCKYENKGCAFSHRRN) adopts a C3H1-type zinc-finger fold. Disordered regions lie at residues 39–73 (ANSGPGATPAKSVATTPTSDKRKFNVNTPSFQPST) and 95–168 (VFVP…QPGP). 2 stretches are compositionally biased toward polar residues: residues 63 to 73 (NVNTPSFQPST) and 101 to 126 (TPASPAQSTPSTGNQEQPMPTSTVSN). The segment at 226–482 (QSYPGGPEIV…LESYIRKHLA (257 aa)) is pseudokinase domain. Residues Arg274, 323-330 (DYYPNAST), and 380-381 (SK) contribute to the ATP site. Residues 483-521 (IRLLDVVDMLEDSNDYLESQLSTELENARLVRLMTKINF) are a coiled coil. Residues 522–620 (IVDRPEWDNE…SVFRTITRGK (99 aa)) are knob domain.

The protein belongs to the protein kinase superfamily. PAN3 family. Homodimer. Forms a heterotrimer with a catalytic subunit PAN2 to form the poly(A)-nuclease (PAN) deadenylation complex. Interacts (via PAM-2 motif) with poly(A)-binding protein PAB1 (via PABC domain), conferring substrate specificity of the enzyme complex.

The protein resides in the cytoplasm. Regulatory subunit of the poly(A)-nuclease (PAN) deadenylation complex, one of two cytoplasmic mRNA deadenylases involved in mRNA turnover. PAN specifically shortens poly(A) tails of RNA and the activity is stimulated by poly(A)-binding protein PAB1. PAN deadenylation is followed by rapid degradation of the shortened mRNA tails by the CCR4-NOT complex. Deadenylated mRNAs are then degraded by two alternative mechanisms, namely exosome-mediated 3'-5' exonucleolytic degradation, or deadenylation-dependent mRNA decaping and subsequent 5'-3' exonucleolytic degradation by XRN1. May also be involved in post-transcriptional maturation of mRNA poly(A) tails. PAN3 acts as a positive regulator for PAN activity, recruiting the catalytic subunit PAN2 to mRNA via its interaction with RNA and with PAB1. The polypeptide is PAN2-PAN3 deadenylation complex subunit PAN3 (Meyerozyma guilliermondii (strain ATCC 6260 / CBS 566 / DSM 6381 / JCM 1539 / NBRC 10279 / NRRL Y-324) (Yeast)).